We begin with the raw amino-acid sequence, 632 residues long: 1,4-alpha-glucan branching enzyme GlgB (632 aa).

Catalysis depends on Asp-310, which acts as the Nucleophile. The Proton donor role is filled by Glu-363.

This sequence belongs to the glycosyl hydrolase 13 family. GlgB subfamily. As to quaternary structure, monomer.

It carries out the reaction Transfers a segment of a (1-&gt;4)-alpha-D-glucan chain to a primary hydroxy group in a similar glucan chain.. It participates in glycan biosynthesis; glycogen biosynthesis. Catalyzes the formation of the alpha-1,6-glucosidic linkages in glycogen by scission of a 1,4-alpha-linked oligosaccharide from growing alpha-1,4-glucan chains and the subsequent attachment of the oligosaccharide to the alpha-1,6 position. The sequence is that of 1,4-alpha-glucan branching enzyme GlgB from Desulfitobacterium hafniense (strain Y51).